The primary structure comprises 42 residues: uncharacterized protein (42 aa).

The helical transmembrane segment at 10–30 (VANWVTVILMALAGYAVLALA) threads the bilayer.

Its subcellular location is the host membrane. This is an uncharacterized protein from Acinetobacter calcoaceticus (Arthrobacter siderocapsulatus).